Reading from the N-terminus, the 312-residue chain is Aspartate carbamoyltransferase catalytic subunit (312 aa).

Carbamoyl phosphate is bound by residues R55 and T56. K83 lines the L-aspartate pocket. R105, H138, and Q141 together coordinate carbamoyl phosphate. Residues R171 and R225 each contribute to the L-aspartate site. Carbamoyl phosphate contacts are provided by G266 and P267.

The protein belongs to the aspartate/ornithine carbamoyltransferase superfamily. ATCase family. In terms of assembly, heterododecamer (2C3:3R2) of six catalytic PyrB chains organized as two trimers (C3), and six regulatory PyrI chains organized as three dimers (R2).

The enzyme catalyses carbamoyl phosphate + L-aspartate = N-carbamoyl-L-aspartate + phosphate + H(+). Its pathway is pyrimidine metabolism; UMP biosynthesis via de novo pathway; (S)-dihydroorotate from bicarbonate: step 2/3. Catalyzes the condensation of carbamoyl phosphate and aspartate to form carbamoyl aspartate and inorganic phosphate, the committed step in the de novo pyrimidine nucleotide biosynthesis pathway. The chain is Aspartate carbamoyltransferase catalytic subunit from Corynebacterium efficiens (strain DSM 44549 / YS-314 / AJ 12310 / JCM 11189 / NBRC 100395).